The sequence spans 400 residues: Imidazolonepropionase (400 aa).

Fe(3+) contacts are provided by H70 and H72. Zn(2+) is bound by residues H70 and H72. Positions 79, 142, and 175 each coordinate 4-imidazolone-5-propanoate. N-formimidoyl-L-glutamate is bound at residue Y142. H239 serves as a coordination point for Fe(3+). Zn(2+) is bound at residue H239. Position 242 (Q242) interacts with 4-imidazolone-5-propanoate. Residue D314 coordinates Fe(3+). Residue D314 participates in Zn(2+) binding. The N-formimidoyl-L-glutamate site is built by N316 and G318. T319 serves as a coordination point for 4-imidazolone-5-propanoate.

Belongs to the metallo-dependent hydrolases superfamily. HutI family. Requires Zn(2+) as cofactor. The cofactor is Fe(3+).

The protein localises to the cytoplasm. It carries out the reaction 4-imidazolone-5-propanoate + H2O = N-formimidoyl-L-glutamate. The protein operates within amino-acid degradation; L-histidine degradation into L-glutamate; N-formimidoyl-L-glutamate from L-histidine: step 3/3. Functionally, catalyzes the hydrolytic cleavage of the carbon-nitrogen bond in imidazolone-5-propanoate to yield N-formimidoyl-L-glutamate. It is the third step in the universal histidine degradation pathway. The polypeptide is Imidazolonepropionase (Methylobacterium nodulans (strain LMG 21967 / CNCM I-2342 / ORS 2060)).